We begin with the raw amino-acid sequence, 264 residues long: MLGVLLCWCLGASVLLYVLYSWLIPAAVQFNGSLALLWHDVIVERALDSLTRSTRPQRLLKAVKQHATRGDPQSVISAIDHFCRHREWAMNVGDEKGCILDSVVSELNPEKVLELGTYCGYSTVRIARLLPPGARLITLEFNPDYAVIARQVIAWAGIEDKVQLVEGASEDWIPRMKEHFGIETFDLVFLDHWKDHYLPDTKLMEGCGLLRKGTVLLADNVICPGVPDYLEYVRNSRSYKSCYFKSHLEYTRAEDGLEKSVFLG.

Residues Met1–Gln29 form the signal peptide. Residue Asn31 is glycosylated (N-linked (GlcNAc...) asparagine). The S-adenosyl-L-methionine site is built by Val92, Ser122, Glu140, and Asp191. Residue Asp191 participates in Mg(2+) binding. Lys194 contacts substrate. Mg(2+) is bound by residues Asp219 and Asn220. 2 residues coordinate substrate: Asn220 and Glu249.

Belongs to the class I-like SAM-binding methyltransferase superfamily. Cation-dependent O-methyltransferase family. The cofactor is Mg(2+). Strongly expressed in eye, diencephalon, spinal cord, hindbrain, liver, kidney and telencephalon. Also detected at very low levels in muscle, spleen, anterior gut and heart. In eye, expressed strongly in retina. In brain, expressed in the central part of the telencephalon, the periventricular gray zone of the optic tectum, the periglomerular nucleus, the olfactory bulb, and the region adjacent to the diencephalic ventricle in the hypothalamus. Expressed in gill, with strongest expression in gill filaments nearest the gill arch, and in esophageal epithelium.

It localises to the secreted. It carries out the reaction a catechol + S-adenosyl-L-methionine = a guaiacol + S-adenosyl-L-homocysteine + H(+). Functionally, catalyzes the O-methylation, and thereby the inactivation, of catecholamine neurotransmitters and catechol hormones. This is Catechol O-methyltransferase B from Danio rerio (Zebrafish).